The primary structure comprises 321 residues: Ribosomal RNA small subunit methyltransferase H (321 aa).

S-adenosyl-L-methionine is bound by residues 42–44, D62, F86, D107, and Q114; that span reads GGH.

Belongs to the methyltransferase superfamily. RsmH family.

Its subcellular location is the cytoplasm. The enzyme catalyses cytidine(1402) in 16S rRNA + S-adenosyl-L-methionine = N(4)-methylcytidine(1402) in 16S rRNA + S-adenosyl-L-homocysteine + H(+). Its function is as follows. Specifically methylates the N4 position of cytidine in position 1402 (C1402) of 16S rRNA. This chain is Ribosomal RNA small subunit methyltransferase H, found in Herminiimonas arsenicoxydans.